We begin with the raw amino-acid sequence, 176 residues long: NAD(P)H-quinone oxidoreductase subunit 6, chloroplastic (176 aa).

5 helical membrane-spanning segments follow: residues 10–30 (FLLV…VLLT), 32–52 (PIFS…LYIL), 63–83 (LLIY…FMNG), 92–112 (LWTV…ISLI), and 152–172 (FFLP…GAIV).

This sequence belongs to the complex I subunit 6 family. As to quaternary structure, NDH is composed of at least 16 different subunits, 5 of which are encoded in the nucleus.

The protein resides in the plastid. Its subcellular location is the chloroplast thylakoid membrane. The enzyme catalyses a plastoquinone + NADH + (n+1) H(+)(in) = a plastoquinol + NAD(+) + n H(+)(out). It catalyses the reaction a plastoquinone + NADPH + (n+1) H(+)(in) = a plastoquinol + NADP(+) + n H(+)(out). Its function is as follows. NDH shuttles electrons from NAD(P)H:plastoquinone, via FMN and iron-sulfur (Fe-S) centers, to quinones in the photosynthetic chain and possibly in a chloroplast respiratory chain. The immediate electron acceptor for the enzyme in this species is believed to be plastoquinone. Couples the redox reaction to proton translocation, and thus conserves the redox energy in a proton gradient. The polypeptide is NAD(P)H-quinone oxidoreductase subunit 6, chloroplastic (ndhG) (Lotus japonicus (Lotus corniculatus var. japonicus)).